We begin with the raw amino-acid sequence, 563 residues long: MIDINSSSSSSSSNNNNSNNNNNNNNNNNSNVFEINSSIKPYFTCIVFVISLIFICSSKNIVTKHLPIGRAGSSIIGATLMVYFGIIQPKEIGSVINWDTIILLMSMMMLSNYMEQANIWGMASKILLWKCKSTSIFMVRVCLISSIMSSILTNDTVCVTLTPIVISACKSTNLTFFPFLMAIATSANIGSSALPVGNPQNMIIATAGGLNFFNFFKVSIVSSILGVCLNTILLLLYFKKDLKNLNSNFNQLIETVNPKVEEIDNNHHDDDGANNQSKNEKEMENINKEVEEEQHNNDDDDDDGFNENKNNNNNGGHAILLVASSMDSIDLSDCSIINKDKKKKENFIEIYFNSKEKSIETIVNIIKLIFKFRVAIILTLVLIGFFIGMHMGFTVLFGVSILMICERKDITDIINSVDWELLLFFSGLFVLVEGFDRQFEKEAWTILEPFVPIDSTHLNVLKIFIFSILILVLCNILGNVPLVLSLSPRLLEALAPDFTWILLAFVSTVAGNLTLVGSVANLIVAEKSKSYHEIGFLEYLKFGVPSTILVILIGVPIVVLIGK.

Residues 1–26 (MIDINSSSSSSSSNNNNSNNNNNNNN) form a disordered region. The next 5 membrane-spanning stretches (helical) occupy residues 35–55 (INSS…LIFI), 67–87 (PIGR…FGII), 91–111 (EIGS…MMLS), 176–196 (FFPF…ALPV), and 218–238 (VSIV…LLYF). A compositionally biased stretch (basic and acidic residues) spans 262-271 (EIDNNHHDDD). A disordered region spans residues 262–284 (EIDNNHHDDDGANNQSKNEKEME). Positions 273 to 303 (ANNQSKNEKEMENINKEVEEEQHNNDDDDDD) form a coiled coil. The next 5 helical transmembrane spans lie at 376-396 (IILT…FTVL), 413-433 (IINS…VLVE), 463-483 (IFIF…VPLV), 500-520 (WILL…GSVA), and 542-562 (FGVP…VLIG).

This sequence belongs to the CitM (TC 2.A.11) transporter family.

Its subcellular location is the cell membrane. This is Putative transporter arsB (arsB) from Dictyostelium discoideum (Social amoeba).